The chain runs to 167 residues: Shikimate kinase (167 aa).

8–15 (GFMGSGKT) is a binding site for ATP.

This sequence belongs to the shikimate kinase family.

Its subcellular location is the cytoplasm. It carries out the reaction shikimate + ATP = 3-phosphoshikimate + ADP + H(+). The protein operates within metabolic intermediate biosynthesis; chorismate biosynthesis; chorismate from D-erythrose 4-phosphate and phosphoenolpyruvate: step 5/7. In Helicobacter hepaticus (strain ATCC 51449 / 3B1), this protein is Shikimate kinase.